A 77-amino-acid chain; its full sequence is Putative antitoxin VapB24 (77 aa).

In terms of biological role, possibly the antitoxin component of a type II toxin-antitoxin (TA) system. Its cognate toxin is VapC24 (Potential). This chain is Putative antitoxin VapB24 (vapB24), found in Mycobacterium tuberculosis (strain CDC 1551 / Oshkosh).